The primary structure comprises 142 residues: MTIEKTFSIIKPDAVKRNLIGAIYQRFENAGLKIVASKMVHLDATKAQGFYAEHEEKPFFNELVEFMTSGPVMVQVLEGEDAIHRYRELMGTTNPENAACGTIRSDFALSMRYNSVHGSDSPESAAREIAYFFTEDEICPRD.

ATP is bound by residues lysine 11, phenylalanine 59, arginine 87, threonine 93, arginine 104, and asparagine 114. Histidine 117 serves as the catalytic Pros-phosphohistidine intermediate.

The protein belongs to the NDK family. Homotetramer. It depends on Mg(2+) as a cofactor.

It localises to the cytoplasm. It carries out the reaction a 2'-deoxyribonucleoside 5'-diphosphate + ATP = a 2'-deoxyribonucleoside 5'-triphosphate + ADP. The catalysed reaction is a ribonucleoside 5'-diphosphate + ATP = a ribonucleoside 5'-triphosphate + ADP. In terms of biological role, major role in the synthesis of nucleoside triphosphates other than ATP. The ATP gamma phosphate is transferred to the NDP beta phosphate via a ping-pong mechanism, using a phosphorylated active-site intermediate. This Photobacterium profundum (strain SS9) protein is Nucleoside diphosphate kinase.